The sequence spans 217 residues: MKLNQDSLTSKFGSPIERVEQAIKSVQQGNGVLLLDDESRENEGDLIYSVDHLTSEQMALMIRSCSGIVCLCLTEDKADYLELSPMVEHNESVNQTAFTISIEAKKGVTTGVSATDRVTTIKTACKNGALPHELAKPGHVFPLRAKDGGVLTRRGHTEGTVDLMRLAELTPAGVLCEVTNSDGSMAKTPEIIIFAEQHHLPVLTVNDIALYRKEKSN.

D-ribulose 5-phosphate-binding positions include 40–41 (RE), aspartate 45, 153–157 (RRGHT), and glutamate 177. Glutamate 41 provides a ligand contact to Mg(2+). Residue histidine 156 participates in Mg(2+) binding.

Belongs to the DHBP synthase family. Homodimer. Requires Mg(2+) as cofactor. The cofactor is Mn(2+).

The catalysed reaction is D-ribulose 5-phosphate = (2S)-2-hydroxy-3-oxobutyl phosphate + formate + H(+). The protein operates within cofactor biosynthesis; riboflavin biosynthesis; 2-hydroxy-3-oxobutyl phosphate from D-ribulose 5-phosphate: step 1/1. Its function is as follows. Catalyzes the conversion of D-ribulose 5-phosphate to formate and 3,4-dihydroxy-2-butanone 4-phosphate. In Aliivibrio fischeri (Vibrio fischeri), this protein is 3,4-dihydroxy-2-butanone 4-phosphate synthase.